We begin with the raw amino-acid sequence, 274 residues long: Large ribosomal subunit protein uL2 (274 aa).

Residues 195–274 are disordered; sequence VGNSDHGLES…SKYIIERRKK (80 aa). Basic residues-rich tracts occupy residues 209 to 220 and 244 to 264; these read GRSRWQGRRPRN and PRSR…KKQS.

This sequence belongs to the universal ribosomal protein uL2 family. Part of the 50S ribosomal subunit. Forms a bridge to the 30S subunit in the 70S ribosome.

Its function is as follows. One of the primary rRNA binding proteins. Required for association of the 30S and 50S subunits to form the 70S ribosome, for tRNA binding and peptide bond formation. It has been suggested to have peptidyltransferase activity; this is somewhat controversial. Makes several contacts with the 16S rRNA in the 70S ribosome. The chain is Large ribosomal subunit protein uL2 from Bacteroides fragilis (strain ATCC 25285 / DSM 2151 / CCUG 4856 / JCM 11019 / LMG 10263 / NCTC 9343 / Onslow / VPI 2553 / EN-2).